Here is a 178-residue protein sequence, read N- to C-terminus: ATP synthase subunit delta (178 aa).

Belongs to the ATPase delta chain family. As to quaternary structure, F-type ATPases have 2 components, F(1) - the catalytic core - and F(0) - the membrane proton channel. F(1) has five subunits: alpha(3), beta(3), gamma(1), delta(1), epsilon(1). F(0) has three main subunits: a(1), b(2) and c(10-14). The alpha and beta chains form an alternating ring which encloses part of the gamma chain. F(1) is attached to F(0) by a central stalk formed by the gamma and epsilon chains, while a peripheral stalk is formed by the delta and b chains.

It localises to the cell membrane. F(1)F(0) ATP synthase produces ATP from ADP in the presence of a proton or sodium gradient. F-type ATPases consist of two structural domains, F(1) containing the extramembraneous catalytic core and F(0) containing the membrane proton channel, linked together by a central stalk and a peripheral stalk. During catalysis, ATP synthesis in the catalytic domain of F(1) is coupled via a rotary mechanism of the central stalk subunits to proton translocation. Its function is as follows. This protein is part of the stalk that links CF(0) to CF(1). It either transmits conformational changes from CF(0) to CF(1) or is implicated in proton conduction. The polypeptide is ATP synthase subunit delta (Streptococcus pyogenes serotype M49 (strain NZ131)).